The sequence spans 1225 residues: DNA-directed RNA polymerase subunit beta' (1225 aa).

Residues cysteine 60, cysteine 62, cysteine 75, and cysteine 78 each contribute to the Zn(2+) site. Positions 450, 452, and 454 each coordinate Mg(2+). Residues cysteine 818, cysteine 892, cysteine 899, and cysteine 902 each contribute to the Zn(2+) site.

This sequence belongs to the RNA polymerase beta' chain family. As to quaternary structure, the RNAP catalytic core consists of 2 alpha, 1 beta, 1 beta' and 1 omega subunit. When a sigma factor is associated with the core the holoenzyme is formed, which can initiate transcription. Mg(2+) is required as a cofactor. It depends on Zn(2+) as a cofactor.

It carries out the reaction RNA(n) + a ribonucleoside 5'-triphosphate = RNA(n+1) + diphosphate. Its function is as follows. DNA-dependent RNA polymerase catalyzes the transcription of DNA into RNA using the four ribonucleoside triphosphates as substrates. The chain is DNA-directed RNA polymerase subunit beta' from Streptococcus pneumoniae (strain ATCC 700669 / Spain 23F-1).